Reading from the N-terminus, the 80-residue chain is Antitoxin VapB15 (80 aa).

The disordered stretch occupies residues 60–80 (DFSNDEIESFSDTDRKLADES). Residue glutamate 67 participates in Mg(2+) binding. Glutamate 67 serves as a coordination point for Mn(2+). A compositionally biased stretch (basic and acidic residues) spans 71–80 (DTDRKLADES).

Forms a VapB15-VapC15(2) heterotrimer and a VapB15(2)-VapC15(2) heterotetramer; each toxin pair forms a homodimer which creates a channel in which the antitoxin binds. It depends on Mg(2+) as a cofactor. Mn(2+) serves as cofactor.

Its function is as follows. Antitoxin component of a type II toxin-antitoxin (TA) system. Neutralizes the toxic effect of cognate toxin VapC15. The chain is Antitoxin VapB15 (vapB15) from Mycobacterium tuberculosis (strain CDC 1551 / Oshkosh).